We begin with the raw amino-acid sequence, 243 residues long: Urease accessory protein UreF 2 (243 aa).

This sequence belongs to the UreF family. As to quaternary structure, ureD, UreF and UreG form a complex that acts as a GTP-hydrolysis-dependent molecular chaperone, activating the urease apoprotein by helping to assemble the nickel containing metallocenter of UreC. The UreE protein probably delivers the nickel.

The protein resides in the cytoplasm. Its function is as follows. Required for maturation of urease via the functional incorporation of the urease nickel metallocenter. In Brucella suis (strain ATCC 23445 / NCTC 10510), this protein is Urease accessory protein UreF 2.